The chain runs to 248 residues: 2,3-bisphosphoglycerate-dependent phosphoglycerate mutase (248 aa).

Substrate is bound by residues 8-15, 21-22, Arg60, 87-90, Lys98, 114-115, and 183-184; these read RHGESTWN, TG, ERHY, RR, and GN. The Tele-phosphohistidine intermediate role is filled by His9. Catalysis depends on Glu87, which acts as the Proton donor/acceptor.

The protein belongs to the phosphoglycerate mutase family. BPG-dependent PGAM subfamily. As to quaternary structure, homodimer.

It catalyses the reaction (2R)-2-phosphoglycerate = (2R)-3-phosphoglycerate. Its pathway is carbohydrate degradation; glycolysis; pyruvate from D-glyceraldehyde 3-phosphate: step 3/5. In terms of biological role, catalyzes the interconversion of 2-phosphoglycerate and 3-phosphoglycerate. This Burkholderia orbicola (strain MC0-3) protein is 2,3-bisphosphoglycerate-dependent phosphoglycerate mutase.